Here is a 416-residue protein sequence, read N- to C-terminus: MELRVGNKYRLGRKIGSGSFGDIYLGANIATGEEVAIKLECVKTKHPQLHIESKFYKMMQGGVGIPSIKWCGAEGDYNVMVMELLGPSLEDLFNFCSRKFSLKTVLLLADQMISRIEYIHSKNFIHRDVKPDNFLMGLGKKGNLVYIIDFGLAKKYRDARTHQHIPYRENKNLTGTARYASINTHLGIEQSRRDDLESLGYVLMYFNLGSLPWQGLKAATKRQKYERISEKKMSTPIEVLCKGYPSEFSTYLNFCRSLRFDDKPDYSYLRQLFRNLFHRQGFSYDYVFDWNMLKFGAARNPEDMDRERREHEREERMGQLRGSATRALPPGPPAGATGNRLRNVAEPMASTPTSRIQQSGNTSPRAISRVDRERKVSMRLHRGAPANVSSSDLTGRQEVSRISASQTSVPFDHLGK.

The Protein kinase domain occupies 9-277; sequence YRLGRKIGSG…YLRQLFRNLF (269 aa). ATP contacts are provided by residues 15–23 and Lys38; that span reads IGSGSFGDI. Asp128 acts as the Proton acceptor in catalysis. Residues 301–318 are compositionally biased toward basic and acidic residues; that stretch reads PEDMDRERREHEREERMG. Residues 301-416 are disordered; sequence PEDMDRERRE…TSVPFDHLGK (116 aa). Low complexity predominate over residues 324 to 338; that stretch reads ATRALPPGPPAGATG. Polar residues-rich tracts occupy residues 350 to 365 and 400 to 409; these read STPT…TSPR and SRISASQTSV.

The protein belongs to the protein kinase superfamily. CK1 Ser/Thr protein kinase family. Casein kinase I subfamily. In terms of assembly, monomer. Component of the circadian core oscillator, which includes the CRY proteins, CLOCK, or NPAS2, BMAL1 or BMAL2, CSNK1E, and the PER proteins.

Its subcellular location is the cytoplasm. It catalyses the reaction L-seryl-[protein] + ATP = O-phospho-L-seryl-[protein] + ADP + H(+). The catalysed reaction is L-threonyl-[protein] + ATP = O-phospho-L-threonyl-[protein] + ADP + H(+). Casein kinases are operationally defined by their preferential utilization of acidic proteins such as caseins as substrates. Can phosphorylate a large number of proteins. Participates in Wnt signaling. Phosphorylates DVL1. Central component of the circadian clock. May act as a negative regulator of circadian rhythmicity by phosphorylating PER1 and PER2. Retains PER1 in the cytoplasm. This is Casein kinase I isoform epsilon (CSNK1E) from Gallus gallus (Chicken).